The chain runs to 208 residues: Ectodysplasin-A receptor-associated adapter protein (208 aa).

The span at M1–V18 shows a compositional bias: basic and acidic residues. Positions M1–S99 are disordered. Over residues T49–Q61 the composition is skewed to polar residues. Positions D116–E195 constitute a Death domain.

As to quaternary structure, binds EDAR. Self-associates and binds TRAF1, TRAF2 and TRAF3.

Its subcellular location is the cytoplasm. Functionally, adapter protein that interacts with EDAR DEATH domain and couples the receptor to EDA signaling pathway during morphogenesis of ectodermal organs. Mediates the activation of NF-kappa-B. In Mus musculus (Mouse), this protein is Ectodysplasin-A receptor-associated adapter protein (Edaradd).